We begin with the raw amino-acid sequence, 43 residues long: Protein PsbN (43 aa).

A helical transmembrane segment spans residues 5–27 (TLVAIFISGSLVSFTGYALYTAF).

It belongs to the PsbN family.

The protein resides in the plastid. It is found in the chloroplast thylakoid membrane. In terms of biological role, may play a role in photosystem I and II biogenesis. This Nelumbo lutea (American lotus) protein is Protein PsbN.